Here is a 156-residue protein sequence, read N- to C-terminus: Small ribosomal subunit protein uS7 (156 aa).

The protein belongs to the universal ribosomal protein uS7 family. In terms of assembly, part of the 30S ribosomal subunit. Contacts proteins S9 and S11.

Its function is as follows. One of the primary rRNA binding proteins, it binds directly to 16S rRNA where it nucleates assembly of the head domain of the 30S subunit. Is located at the subunit interface close to the decoding center, probably blocks exit of the E-site tRNA. This Acinetobacter baumannii (strain AB307-0294) protein is Small ribosomal subunit protein uS7.